The chain runs to 379 residues: (R)-2-hydroxyglutaryl-CoA dehydratase, subunit beta (379 aa).

Belongs to the FldB/FldC dehydratase alpha/beta subunit family. In terms of assembly, the (R)-2-hydroxyglutaryl-CoA dehydratase enzyme system is a heterodimer composed of an alpha subunit (HgdA) and a beta subunit (HgdB). The cofactor is [4Fe-4S] cluster. FMN serves as cofactor. Requires Mg(2+) as cofactor.

It is found in the cytoplasm. The catalysed reaction is (R)-2-hydroxyglutaryl-CoA = (2E)-glutaconyl-CoA + H2O. Its pathway is amino-acid degradation; L-glutamate degradation via hydroxyglutarate pathway; crotonoyl-CoA from L-glutamate: step 4/5. Its activity is regulated as follows. Activated by the HgdC. Reversibly inactivated by oxidants such as 2-nitrophenol, 3-nitrophenol, 4-nitrophenol, 4-nitrobenzoate, carbonyl cyanide 4-(trifluoromethoxy)phenylhydrazone (FCCP) and chloramphenicol. Irreversibly inactivated by oxidants such as hydroxylamine and nitrite. In terms of biological role, involved in the fermentation of L-glutamate via the hydroxyglutarate pathway. Catalyzes the reversible syn-elimination of water from (R)-2-hydroxyglutaryl-CoA to yield (E)-glutaconyl-CoA. The dehydration mechanism involves a transient one electron reduction of the thioester from (R)-2-hydroxyglutaryl-CoA, generating a ketyl radical. Prior to (E)-glutaconyl-CoA formation, the ketyl radical is subsequently reoxidized by electron transfer back to the HgdA-HgdB complex (CompD) to avoid change in oxidation state of the substrate. The appropriate redox state of dehydratase HgdA-HgdB complex (CompD) is maintained by HgdC (CompA) via hydrolysis of ATP and ATP-dependent electron transfer. Since the electron is recycled, the dehydratase is able to perform several turnovers with only catalytic amounts of ATP and substoichiometric amounts of HgdC (CompA). The protein is (R)-2-hydroxyglutaryl-CoA dehydratase, subunit beta of Acidaminococcus fermentans (strain ATCC 25085 / DSM 20731 / CCUG 9996 / CIP 106432 / VR4).